The sequence spans 1212 residues: DNA topoisomerase 1 (1212 aa).

Positions 1–114 (MKLVVVESPA…DVERVTFNAI (114 aa)) constitute a Toprim domain. Positions 7 and 80 each coordinate Mg(2+). The 427-residue stretch at 130-556 (DNDLINAYLA…AFWHDFKPKT (427 aa)) folds into the Topo IA-type catalytic domain. The segment at 164-169 (SAGRVQ) is interaction with DNA. The active-site O-(5'-phospho-DNA)-tyrosine intermediate is Tyr-293. The segment at 592 to 619 (CPSCHTGRLALKGGRFGAFIACSNYPEC) adopts a C4-type zinc-finger fold. Disordered stretches follow at residues 687–742 (GKGN…GVST), 758–937 (ALAG…KARA), and 1107–1212 (RAKM…EVAE). Polar residues-rich tracts occupy residues 708-742 (ASST…GVST) and 770-782 (VSDN…SSTI). A compositionally biased stretch (basic and acidic residues) spans 815–840 (ADNRLLSHRNGDIDSRAIPADHKDSS). 2 stretches are compositionally biased toward polar residues: residues 881–890 (AITSDNSPSD) and 897–906 (STPSSATSSV). Over residues 921 to 934 (KADEQAKEEEESRK) the composition is skewed to basic and acidic residues. The span at 1109–1140 (KMPKKKKTKKAAAKKPAAKKTTTKKAAPKKAT) shows a compositional bias: basic residues. Residues 1141–1151 (TKTATPKSATT) show a composition bias toward low complexity. Over residues 1167–1182 (PAKKAVAKKTTAKKPA) the composition is skewed to basic residues. The segment covering 1183 to 1199 (SKSATKKAPSSKTTAAK) has biased composition (low complexity).

This sequence belongs to the type IA topoisomerase family. As to quaternary structure, monomer. It depends on Mg(2+) as a cofactor.

The enzyme catalyses ATP-independent breakage of single-stranded DNA, followed by passage and rejoining.. In terms of biological role, releases the supercoiling and torsional tension of DNA, which is introduced during the DNA replication and transcription, by transiently cleaving and rejoining one strand of the DNA duplex. Introduces a single-strand break via transesterification at a target site in duplex DNA. The scissile phosphodiester is attacked by the catalytic tyrosine of the enzyme, resulting in the formation of a DNA-(5'-phosphotyrosyl)-enzyme intermediate and the expulsion of a 3'-OH DNA strand. The free DNA strand then undergoes passage around the unbroken strand, thus removing DNA supercoils. Finally, in the religation step, the DNA 3'-OH attacks the covalent intermediate to expel the active-site tyrosine and restore the DNA phosphodiester backbone. The sequence is that of DNA topoisomerase 1 from Zymomonas mobilis subsp. mobilis (strain ATCC 31821 / ZM4 / CP4).